A 347-amino-acid chain; its full sequence is Mitochondrial genome maintenance exonuclease 1 (347 aa).

Catalysis depends on residues Asp246, Asp259, and Lys261.

This sequence belongs to the MGME1 family.

Its subcellular location is the mitochondrion. Functionally, single-stranded DNA (ssDNA) metal-dependent exonuclease involved in mitochondrial genome maintenance. Has preference for 5'-3' exonuclease activity. Necessary for maintenance of proper 7S DNA levels. Probably involved in mitochondrial DNA (mtDNA) repair. Specifically binds 5-hydroxymethylcytosine (5hmC)-containing DNA in stem cells. This chain is Mitochondrial genome maintenance exonuclease 1 (mgme1), found in Xenopus tropicalis (Western clawed frog).